The sequence spans 481 residues: Cobyric acid synthase (481 aa).

In terms of domain architecture, GATase cobBQ-type spans 244–431; the sequence is VLRVVIPVLP…LHGLFDAPEA (188 aa). Cys-325 serves as the catalytic Nucleophile. Residue His-423 is part of the active site.

It belongs to the CobB/CobQ family. CobQ subfamily.

Its pathway is cofactor biosynthesis; adenosylcobalamin biosynthesis. Catalyzes amidations at positions B, D, E, and G on adenosylcobyrinic A,C-diamide. NH(2) groups are provided by glutamine, and one molecule of ATP is hydrogenolyzed for each amidation. The polypeptide is Cobyric acid synthase (Ralstonia nicotianae (strain ATCC BAA-1114 / GMI1000) (Ralstonia solanacearum)).